The sequence spans 183 residues: Threonylcarbamoyl-AMP synthase (183 aa).

One can recognise a YrdC-like domain in the interval M1–G183.

It belongs to the SUA5 family. TsaC subfamily.

The protein localises to the cytoplasm. The enzyme catalyses L-threonine + hydrogencarbonate + ATP = L-threonylcarbamoyladenylate + diphosphate + H2O. Functionally, required for the formation of a threonylcarbamoyl group on adenosine at position 37 (t(6)A37) in tRNAs that read codons beginning with adenine. Catalyzes the conversion of L-threonine, HCO(3)(-)/CO(2) and ATP to give threonylcarbamoyl-AMP (TC-AMP) as the acyladenylate intermediate, with the release of diphosphate. The polypeptide is Threonylcarbamoyl-AMP synthase (Haemophilus influenzae (strain PittEE)).